A 431-amino-acid chain; its full sequence is Putative F-box/FBD/LRR-repeat protein At3g56780 (431 aa).

Positions 6 to 62 (CSCINELPDDLILKILSFVSTKHVVVTSLLSKKWKSLWTRVPILKYDVRDHTRFERF) constitute an F-box domain. 8 LRR repeats span residues 56-82 (HTRF…HVEL), 88-113 (NKDI…EIDA), 135-161 (LKGI…HIDH), 162-187 (SSLF…MVIR), 209-236 (LEGL…HVAR), 237-262 (MEDF…TLEE), 264-285 (TSDV…SIIT), and 357-382 (CSER…KLEH). One can recognise an FBD domain in the interval 391–423 (RWEPPSLVPECLLSSLEALEWKGYTGRYGDKDL).

The sequence is that of Putative F-box/FBD/LRR-repeat protein At3g56780 from Arabidopsis thaliana (Mouse-ear cress).